The sequence spans 455 residues: Single-stranded DNA-binding protein homolog sam-10 (455 aa).

Residues 19 to 51 (ARDRLTSYIYEYLQQTGASKTAETFKEEVLSTN) form the LisH domain. 4 disordered regions span residues 217–249 (PPPG…LNSP), 281–302 (SDHQ…TAGG), 314–343 (GPGS…HQPK), and 357–442 (EALT…NGEI). Composition is skewed to low complexity over residues 288–298 (AGPAAAAPGAT) and 321–336 (VATT…SSIG). Over residues 396 to 406 (HSVNNNVNPGT) the composition is skewed to polar residues. Positions 407-421 (PGSNPLSNPMSNPPL) are enriched in low complexity.

As to expression, ubiquitously expressed with higher expression in the head and tail ganglia, the vulva and PLM neurons.

It is found in the cytoplasm. It localises to the nucleus. Its function is as follows. Involved cell autonomously in PLM neuron pre-synaptic differentiation by negatively regulating prk-2 expression and in neurite branch positioning. The chain is Single-stranded DNA-binding protein homolog sam-10 from Caenorhabditis elegans.